Consider the following 328-residue polypeptide: Malate dehydrogenase (328 aa).

Position 11–17 (11–17 (GAAGQIG)) interacts with NAD(+). Positions 94 and 100 each coordinate substrate. Residues N107, Q114, and 131-133 (VGN) contribute to the NAD(+) site. Substrate contacts are provided by N133 and R164. The active-site Proton acceptor is H189.

It belongs to the LDH/MDH superfamily. MDH type 2 family.

The catalysed reaction is (S)-malate + NAD(+) = oxaloacetate + NADH + H(+). Catalyzes the reversible oxidation of malate to oxaloacetate. This is Malate dehydrogenase from Xylella fastidiosa (strain M12).